The primary structure comprises 144 residues: TSC22 domain family protein 1 (144 aa).

A leucine-zipper region spans residues 77–98; that stretch reads LKEQIKELIEKNSQLEQENNLL. The tract at residues 109-144 is disordered; that stretch reads QFQAQLQTGSPPATTQPQGTTQPPAQPASQGSGPTA. A compositionally biased stretch (low complexity) spans 115 to 144; the sequence is QTGSPPATTQPQGTTQPPAQPASQGSGPTA.

This sequence belongs to the TSC-22/Dip/Bun family. Forms homodimers. Forms a heterodimer with TSC22D4/THG1. Interacts with histone H1-2. Interacts with GNL3.

Its subcellular location is the cytoplasm. It is found in the nucleus. Functionally, transcriptional repressor. Plays a role in the repression of hematopoietic precursor cell growth. Promotes IL2 deprivation-induced apoptosis in T-lymphocytes, via repression of TSC22D3/GILZ transcription and activation of the caspase cascade. Positively regulates cell death in response to TGFB3 during mammary gland involution. The protein is TSC22 domain family protein 1 of Bos taurus (Bovine).